Consider the following 315-residue polypeptide: Aspartate carbamoyltransferase catalytic subunit (315 aa).

Positions 64 and 65 each coordinate carbamoyl phosphate. Lys-92 provides a ligand contact to L-aspartate. Arg-114, His-142, and Gln-145 together coordinate carbamoyl phosphate. 2 residues coordinate L-aspartate: Arg-176 and Arg-230. Gly-271 and Pro-272 together coordinate carbamoyl phosphate.

Belongs to the aspartate/ornithine carbamoyltransferase superfamily. ATCase family. In terms of assembly, heterododecamer (2C3:3R2) of six catalytic PyrB chains organized as two trimers (C3), and six regulatory PyrI chains organized as three dimers (R2).

It catalyses the reaction carbamoyl phosphate + L-aspartate = N-carbamoyl-L-aspartate + phosphate + H(+). The protein operates within pyrimidine metabolism; UMP biosynthesis via de novo pathway; (S)-dihydroorotate from bicarbonate: step 2/3. In terms of biological role, catalyzes the condensation of carbamoyl phosphate and aspartate to form carbamoyl aspartate and inorganic phosphate, the committed step in the de novo pyrimidine nucleotide biosynthesis pathway. This chain is Aspartate carbamoyltransferase catalytic subunit, found in Lawsonia intracellularis (strain PHE/MN1-00).